Consider the following 305-residue polypeptide: Phosphopantetheine adenylyltransferase (305 aa).

The protein belongs to the eukaryotic CoaD family.

The protein resides in the cytoplasm. It localises to the nucleus. It carries out the reaction (R)-4'-phosphopantetheine + ATP + H(+) = 3'-dephospho-CoA + diphosphate. Reversibly transfers an adenylyl group from ATP to 4'-phosphopantetheine, yielding dephospho-CoA (dPCoA) and pyrophosphate. Plays a role in the physiological regulation of the intracellular CoA concentration. The sequence is that of Phosphopantetheine adenylyltransferase (CAB4) from Saccharomyces cerevisiae (strain ATCC 204508 / S288c) (Baker's yeast).